A 107-amino-acid polypeptide reads, in one-letter code: Small ribosomal subunit protein uS10 (107 aa).

Belongs to the universal ribosomal protein uS10 family. As to quaternary structure, part of the 30S ribosomal subunit.

Functionally, involved in the binding of tRNA to the ribosomes. The chain is Small ribosomal subunit protein uS10 from Deinococcus geothermalis (strain DSM 11300 / CIP 105573 / AG-3a).